The primary structure comprises 217 residues: Elongation factor Ts (217 aa).

The interval Thr81–Val84 is involved in Mg(2+) ion dislocation from EF-Tu.

The protein belongs to the EF-Ts family.

It localises to the cytoplasm. Its function is as follows. Associates with the EF-Tu.GDP complex and induces the exchange of GDP to GTP. It remains bound to the aminoacyl-tRNA.EF-Tu.GTP complex up to the GTP hydrolysis stage on the ribosome. This is Elongation factor Ts from Myxococcus xanthus (strain DK1622).